The primary structure comprises 405 residues: 26S proteasome regulatory subunit 8 homolog (405 aa).

Thr-2 is modified (N-acetylthreonine). 189–196 is a binding site for ATP; sequence GPPGTGKT.

This sequence belongs to the AAA ATPase family. May form a homodimer or a heterodimer with a related family member. Interacts with OLA1, TMA17, and UBR1. Post-translationally, N-acetylated by NAT1.

The protein resides in the cytoplasm. Its subcellular location is the nucleus. Functionally, the 26S proteasome is involved in the ATP-dependent degradation of ubiquitinated proteins. The regulatory (or ATPase) complex confers ATP dependency and substrate specificity to the 26S complex. This chain is 26S proteasome regulatory subunit 8 homolog (RPT6), found in Saccharomyces cerevisiae (strain ATCC 204508 / S288c) (Baker's yeast).